We begin with the raw amino-acid sequence, 147 residues long: MMWWAVWCAAMVAGSVFTAAAPPTDSIDLMQMDPSLADDESLGFAMQSLSGRYAAAPWLYLLADVSHDPQRMAEFSQSSGRARPKRKMPSLSINNPMEVLRQRLLLEVARKQMREANQRQAVANRLFLQNVGKRGAWGEPASYLYNN.

An N-terminal signal peptide occupies residues M1–S26. The propeptide occupies I27–P84. V131 is modified (valine amide). A propeptide spanning residues G135–N147 is cleaved from the precursor.

It belongs to the sauvagine/corticotropin-releasing factor/urotensin I family.

It localises to the secreted. Regulation of fluid secretion. In Bombyx mori (Silk moth), this protein is Diuretic hormone 45 (dh45).